Reading from the N-terminus, the 386-residue chain is Methylthioribose-1-phosphate isomerase (386 aa).

D258 functions as the Proton donor in the catalytic mechanism.

Belongs to the eIF-2B alpha/beta/delta subunits family. MtnA subfamily.

It localises to the cytoplasm. It is found in the nucleus. It carries out the reaction 5-(methylsulfanyl)-alpha-D-ribose 1-phosphate = 5-(methylsulfanyl)-D-ribulose 1-phosphate. The protein operates within amino-acid biosynthesis; L-methionine biosynthesis via salvage pathway; L-methionine from S-methyl-5-thio-alpha-D-ribose 1-phosphate: step 1/6. Catalyzes the interconversion of methylthioribose-1-phosphate (MTR-1-P) into methylthioribulose-1-phosphate (MTRu-1-P). The sequence is that of Methylthioribose-1-phosphate isomerase from Uncinocarpus reesii (strain UAMH 1704).